A 233-amino-acid polypeptide reads, in one-letter code: Biosynthetic peptidoglycan transglycosylase (233 aa).

Residues 8 to 28 traverse the membrane as a helical segment; it reads LIALPVGIFIFFNAYVYGNII.

The protein belongs to the glycosyltransferase 51 family.

It localises to the cell inner membrane. It carries out the reaction [GlcNAc-(1-&gt;4)-Mur2Ac(oyl-L-Ala-gamma-D-Glu-L-Lys-D-Ala-D-Ala)](n)-di-trans,octa-cis-undecaprenyl diphosphate + beta-D-GlcNAc-(1-&gt;4)-Mur2Ac(oyl-L-Ala-gamma-D-Glu-L-Lys-D-Ala-D-Ala)-di-trans,octa-cis-undecaprenyl diphosphate = [GlcNAc-(1-&gt;4)-Mur2Ac(oyl-L-Ala-gamma-D-Glu-L-Lys-D-Ala-D-Ala)](n+1)-di-trans,octa-cis-undecaprenyl diphosphate + di-trans,octa-cis-undecaprenyl diphosphate + H(+). The protein operates within cell wall biogenesis; peptidoglycan biosynthesis. Functionally, peptidoglycan polymerase that catalyzes glycan chain elongation from lipid-linked precursors. This is Biosynthetic peptidoglycan transglycosylase from Neisseria gonorrhoeae (strain ATCC 700825 / FA 1090).